The sequence spans 62 residues: Photosystem II reaction center protein Z (62 aa).

A run of 2 helical transmembrane segments spans residues 8–28 and 41–61; these read AVFA…VVFA and FSGT…NSLI.

This sequence belongs to the PsbZ family. PSII is composed of 1 copy each of membrane proteins PsbA, PsbB, PsbC, PsbD, PsbE, PsbF, PsbH, PsbI, PsbJ, PsbK, PsbL, PsbM, PsbT, PsbY, PsbZ, Psb30/Ycf12, at least 3 peripheral proteins of the oxygen-evolving complex and a large number of cofactors. It forms dimeric complexes.

The protein localises to the plastid. It localises to the chloroplast thylakoid membrane. Its function is as follows. May control the interaction of photosystem II (PSII) cores with the light-harvesting antenna, regulates electron flow through the 2 photosystem reaction centers. PSII is a light-driven water plastoquinone oxidoreductase, using light energy to abstract electrons from H(2)O, generating a proton gradient subsequently used for ATP formation. In Nicotiana sylvestris (Wood tobacco), this protein is Photosystem II reaction center protein Z.